The sequence spans 297 residues: Vacuolar protein sorting-associated protein 26C (297 aa).

This sequence belongs to the VPS26 family. Component of the commander complex that is essential for endosomal recycling of transmembrane cargos; the commander complex is composed of the CCC subcomplex and the retriever subcomplex. Component of the heterotrimeric retriever complex consisting of VPS26C, VPS29 and VPS35L; within the complex interacts with VPS35L. Interacts with SNX17 (via C-terminus); the interaction is direct and associates SNX17 with the retriever complex. Interacts with SNX31; the interaction is direct.

It is found in the endosome. Functionally, component of the commander complex that is essential for endosomal recycling of transmembrane cargos; the commander complex is composed of the CCC subcomplex and the retriever subcomplex. Component of the retriever complex, which is a heterotrimeric complex related to retromer cargo-selective complex (CSC) and essential for retromer-independent retrieval and recycling of numerous cargos such as integrin alpha-5/beta-1 (ITGA5:ITGB1). The recruitment of the retriever complex to the endosomal membrane involves CCC and WASH complexes. In the endosomes, drives the retriever and recycling of NxxY-motif-containing cargo proteins by coupling to SNX17, a cargo essential for the homeostatic maintenance of numerous cell surface proteins associated with processes that include cell migration, cell adhesion, nutrient supply and cell signaling. This is Vacuolar protein sorting-associated protein 26C (VPS26C) from Pongo abelii (Sumatran orangutan).